The sequence spans 194 residues: Putative manganese efflux pump MntP (194 aa).

6 consecutive transmembrane segments (helical) span residues 3-23 (PFSI…AAIG), 37-57 (LRAG…GWLL), 69-89 (DHWI…VAGL), 110-132 (LGLA…SLAF), 147-167 (CTFS…NLIG), and 172-192 (MLGG…HLSG).

The protein belongs to the MntP (TC 9.B.29) family.

It is found in the cell inner membrane. Functionally, probably functions as a manganese efflux pump. The sequence is that of Putative manganese efflux pump MntP from Xanthomonas euvesicatoria pv. vesicatoria (strain 85-10) (Xanthomonas campestris pv. vesicatoria).